We begin with the raw amino-acid sequence, 477 residues long: uncharacterized protein (477 aa).

Residues 107–129 (VNFWSLSMACASVLALLGLVYLI) traverse the membrane as a helical segment.

The protein resides in the membrane. This is an uncharacterized protein from Treponema pallidum (strain Nichols).